Reading from the N-terminus, the 431-residue chain is Shaggy-related protein kinase beta (431 aa).

Residues 12–24 (SGRNFVSSDNVGE) are compositionally biased toward polar residues. The interval 12 to 65 (SGRNFVSSDNVGETETPRSKPNQNREETESTETTSYEKDSVSSSENSDHLPKEI) is disordered. Basic and acidic residues-rich tracts occupy residues 26–39 (ETPR…REET) and 46–65 (SYEK…PKEI). In terms of domain architecture, Protein kinase spans 102–386 (YRAEHVIGTG…ALEACAHPFF (285 aa)). Residues 108-116 (IGTGSFGVV) and lysine 131 each bind ATP. The active-site Proton acceptor is the aspartate 227. At tyrosine 262 the chain carries Phosphotyrosine.

The protein belongs to the protein kinase superfamily. CMGC Ser/Thr protein kinase family. GSK-3 subfamily. Post-translationally, autophosphorylated mainly on threonine and serine residues.

It carries out the reaction L-seryl-[protein] + ATP = O-phospho-L-seryl-[protein] + ADP + H(+). The catalysed reaction is L-threonyl-[protein] + ATP = O-phospho-L-threonyl-[protein] + ADP + H(+). In terms of biological role, may mediate extracellular signals to regulate transcription in differentiating cells. This chain is Shaggy-related protein kinase beta, found in Arabidopsis thaliana (Mouse-ear cress).